A 397-amino-acid polypeptide reads, in one-letter code: Elongation factor Tu (397 aa).

Residues 10-206 (KPHVNIGTIG…AVDTSIPQPE (197 aa)) form the tr-type G domain. The G1 stretch occupies residues 19–26 (GHIDHGKT). Residue 19 to 26 (GHIDHGKT) participates in GTP binding. Thr26 is a Mg(2+) binding site. Positions 62–66 (GITIS) are G2. The tract at residues 83-86 (DCPG) is G3. Residues 83–87 (DCPGH) and 138–141 (NKSD) each bind GTP. The interval 138-141 (NKSD) is G4. Positions 176–178 (SAL) are G5.

It belongs to the TRAFAC class translation factor GTPase superfamily. Classic translation factor GTPase family. EF-Tu/EF-1A subfamily. Monomer.

It localises to the cytoplasm. The enzyme catalyses GTP + H2O = GDP + phosphate + H(+). In terms of biological role, GTP hydrolase that promotes the GTP-dependent binding of aminoacyl-tRNA to the A-site of ribosomes during protein biosynthesis. The chain is Elongation factor Tu from Salinispora arenicola (strain CNS-205).